Consider the following 250-residue polypeptide: Putative apoptosis inhibitor ORF99 (250 aa).

The stretch at 13–78 (RVNSFGGWSK…KFSGDCLYLK (66 aa)) is one BIR repeat.

In terms of biological role, may act as an apoptosis inhibitor. This is Putative apoptosis inhibitor ORF99 from Ostreid herpesvirus 1 (isolate France) (OsHV-1).